A 230-amino-acid chain; its full sequence is Protein RESPONSE TO ABA AND SALT 1 (230 aa).

Residues 7–230 (SQSFTIFVDG…RLRDRDQERA (224 aa)) form the DOG1 domain.

Functionally, negative regulator of salt (NaCl) tolerance probably by enhancing abscisic acid (ABA) sensitivity. The polypeptide is Protein RESPONSE TO ABA AND SALT 1 (Arabidopsis thaliana (Mouse-ear cress)).